A 1470-amino-acid polypeptide reads, in one-letter code: Transient receptor potential cation channel subfamily M member 2 (1470 aa).

The Cytoplasmic portion of the chain corresponds to 1-725 (MDEAALEPTL…GELSVDNPHW (725 aa)). ADP-D-ribose is bound by residues Tyr267, Arg274, 305-308 (GPGT), and Arg330. Residues 726-738 (KVLLCMIFFPLIY) lie within the membrane without spanning it. At 739–808 (TGFLTFRRDE…MSFLKSPQVK (70 aa)) the chain is on the cytoplasmic side. The helical transmembrane segment at 809-829 (FYWNIASYFGFLWLFAVVLMI) threads the bilayer. Over 830 to 836 (DFQTSPS) the chain is Extracellular. Residues 837 to 857 (WRELLLYVWLTSLVCEEIRQL) form a helical membrane-spanning segment. Positions 853 and 856 each coordinate Ca(2+). Topologically, residues 858–876 (YHDFDGSGFRRKAKMYIKD) are cytoplasmic. Residues 877–897 (LWNILDVLSIVLFIAGLICRL) traverse the membrane as a helical segment. Residue Asn879 participates in Ca(2+) binding. Topologically, residues 898–905 (QASDTVFY) are extracellular. A helical transmembrane segment spans residues 906–926 (IGKVILCIDFIIFCLRLMAIF). The Cytoplasmic portion of the chain corresponds to 927 to 941 (SISRTLGPKIIIVRR). The chain crosses the membrane as a helical span at residues 942-968 (MMLDLFFFMFLLSIWVVAYGVAKQGIL). Residues 969–977 (IENEERLNW) lie on the Extracellular side of the membrane. The segment at residues 978-1002 (IIRGAVYEPYITIFGNFPTNIDNTL) is an intramembrane region (pore-forming). A Selectivity filter motif is present at residues 991–993 (FGN). Residues 1003–1034 (FDISSCSVNASDPLKPKCPMLNADNTPVFPEW) lie on the Extracellular side of the membrane. Cys1008 and Cys1020 are oxidised to a cystine. An N-linked (GlcNAc...) asparagine glycan is attached at Asn1011. Residues 1035–1059 (LTIMMLCVYLLFANILLLNLLIAIF) form a helical membrane-spanning segment. Residues 1060–1087 (NYTFQEVQDNTDTIWKFQRYELIKEYHS) lie on the Cytoplasmic side of the membrane. Position 1084 (Glu1084) interacts with Ca(2+). The stretch at 1088–1105 (RPALPPPFILLSHLILFI) is an intramembrane region. At 1106–1470 (RGVFLRDLPQ…QIAHHHNTYF (365 aa)) the chain is on the cytoplasmic side. The interval 1157–1470 (HRIHDTAEKV…QIAHHHNTYF (314 aa)) is divergent Nudix hydrolase-like domain. 2 disordered regions span residues 1215–1256 (KSKV…LQYP) and 1281–1314 (PPVY…GKGA). The span at 1231 to 1244 (DDGDSSGQETDDEE) shows a compositional bias: acidic residues. Positions 1283–1295 (VYNQQDSSESDTS) are enriched in polar residues. Residues Asp1398 and Arg1400 each coordinate ADP-D-ribose.

This sequence belongs to the transient receptor (TC 1.A.4) family. LTrpC subfamily. TRPM2 sub-subfamily. As to quaternary structure, homotetramer.

The protein resides in the cell membrane. It catalyses the reaction Ca(2+)(in) = Ca(2+)(out). The catalysed reaction is Na(+)(in) = Na(+)(out). Its activity is regulated as follows. Activated by intracellular ADP-ribose. Ca(2+) and PI(4,5)P2 are required for channel opening by ADP-ribose. Nonselective, voltage-independent cation channel that mediates Ca(2+) influx, leading to increased cytoplasmic Ca(2+) levels. Functions as a ligand-gated ion channel, gated by intracellular adenosine diphosphate ribose (ADP-ribose), Ca(2+), warm temperature, and oxidative stress. Binding of ADP-ribose to the cytoplasmic N-terminal region causes a conformation change; the channel is primed but still requires Ca(2+) binding to trigger channel opening. The protein is Transient receptor potential cation channel subfamily M member 2 of Danio rerio (Zebrafish).